A 57-amino-acid chain; its full sequence is UPF0434 protein Spea_1772 (57 aa).

Belongs to the UPF0434 family.

The polypeptide is UPF0434 protein Spea_1772 (Shewanella pealeana (strain ATCC 700345 / ANG-SQ1)).